Consider the following 335-residue polypeptide: Biotin synthase (335 aa).

Residues 1–20 are disordered; the sequence is MVSVGTQSHSGRDQAEQNPS. The region spanning 59 to 284 is the Radical SAM core domain; that stretch reads GHLQKSSLLS…MMPQSMVRLS (226 aa). The [4Fe-4S] cluster site is built by Cys-74, Cys-78, and Cys-81. Cys-118, Cys-150, Cys-210, and Arg-282 together coordinate [2Fe-2S] cluster.

The protein belongs to the radical SAM superfamily. Biotin synthase family. Homodimer. [4Fe-4S] cluster is required as a cofactor. The cofactor is [2Fe-2S] cluster.

It carries out the reaction (4R,5S)-dethiobiotin + (sulfur carrier)-SH + 2 reduced [2Fe-2S]-[ferredoxin] + 2 S-adenosyl-L-methionine = (sulfur carrier)-H + biotin + 2 5'-deoxyadenosine + 2 L-methionine + 2 oxidized [2Fe-2S]-[ferredoxin]. It functions in the pathway cofactor biosynthesis; biotin biosynthesis; biotin from 7,8-diaminononanoate: step 2/2. Functionally, catalyzes the conversion of dethiobiotin (DTB) to biotin by the insertion of a sulfur atom into dethiobiotin via a radical-based mechanism. The polypeptide is Biotin synthase (Zymomonas mobilis subsp. mobilis (strain ATCC 31821 / ZM4 / CP4)).